Reading from the N-terminus, the 138-residue chain is Phosphoribosyl-AMP cyclohydrolase (138 aa).

Asp84 is a binding site for Mg(2+). Cys85 serves as a coordination point for Zn(2+). Asp86 and Asp88 together coordinate Mg(2+). Positions 102 and 109 each coordinate Zn(2+).

Belongs to the PRA-CH family. In terms of assembly, homodimer. The cofactor is Mg(2+). It depends on Zn(2+) as a cofactor.

It is found in the cytoplasm. The enzyme catalyses 1-(5-phospho-beta-D-ribosyl)-5'-AMP + H2O = 1-(5-phospho-beta-D-ribosyl)-5-[(5-phospho-beta-D-ribosylamino)methylideneamino]imidazole-4-carboxamide. It participates in amino-acid biosynthesis; L-histidine biosynthesis; L-histidine from 5-phospho-alpha-D-ribose 1-diphosphate: step 3/9. Functionally, catalyzes the hydrolysis of the adenine ring of phosphoribosyl-AMP. The polypeptide is Phosphoribosyl-AMP cyclohydrolase (Burkholderia vietnamiensis (strain G4 / LMG 22486) (Burkholderia cepacia (strain R1808))).